The chain runs to 490 residues: 5'-3' exonuclease PLD3 (490 aa).

At 1-38 (MKPKLMYQELKVPAEEPASELPMNEIEAWKAAEKKARW) the chain is on the cytoplasmic side. A helical; Signal-anchor for type II membrane protein membrane pass occupies residues 39–59 (VLLVLILAVVGFGALMTQLFL). Residues 60–490 (WEYGDLHLFG…DSVGNACRLL (431 aa)) are Lumenal-facing. 2 disulfides stabilise this stretch: cysteine 77–cysteine 239 and cysteine 81–cysteine 237. Residues asparagine 97 and asparagine 132 are each glycosylated (N-linked (GlcNAc...) asparagine). Positions 196–223 (THGVLHTKFWVVDQTHFYLGSANMDWRS) constitute a PLD phosphodiesterase 1 domain. Catalysis depends on residues histidine 201, lysine 203, and aspartate 208. Residue histidine 201 is the Proton donor of the active site. Phosphate contacts are provided by histidine 201 and lysine 203. Asparagine 218 provides a ligand contact to phosphate. N-linked (GlcNAc...) asparagine glycans are attached at residues asparagine 236, asparagine 284, and asparagine 387. The cysteines at positions 366 and 487 are disulfide-linked. The PLD phosphodiesterase 2 domain occupies 411-437 (YARVNHNKYMVTERATYIGTSNWSGSY). Phosphate is bound at residue histidine 416. Histidine 416 serves as the catalytic Nucleophile. Phenylalanine 438 lines the Mg(2+) pocket.

It belongs to the phospholipase D family. As to quaternary structure, homodimer. Interacts with APP. Post-translationally, N-glycosylated. Proteolytically processed to a soluble form that is stable within endosomes and lysosomes. During transport through the secretory pathway becomes proteolysed by cysteine proteases, thereby releasing a stable soluble lysosomal lumenal polypeptide, whereas the transmembrane-bound fragment is rapidly degraded. Its transport route to lysosomes involves ubiquitination and the ESCRT complex. In terms of processing, ubiquitinated. Ubiquitination mediates sorting into lysosomes.

Its subcellular location is the endoplasmic reticulum membrane. The protein resides in the lysosome lumen. It is found in the early endosome membrane. The protein localises to the late endosome membrane. It localises to the golgi apparatus membrane. Its subcellular location is the endosome membrane. The enzyme catalyses Exonucleolytic cleavage in the 5'- to 3'-direction to yield nucleoside 3'-phosphates.. It catalyses the reaction a 5'-end 5'-dephospho-ribonucleotidyl-ribonucleotide-RNA + H2O = a ribonucleoside 3'-phosphate + a 5'-end dephospho-ribonucleoside-RNA + H(+). It carries out the reaction a ribonucleoside 3'-phosphate-2'-3'-cyclophospho-GMP + H2O = a ribonucleoside 3'-phosphate + 2',3'-cyclophospho-GMP + H(+). The catalysed reaction is a 5'-end 5'-dephospho-2'-deoxyribonucleotidyl-2'-deoxyribonucleotide in single-stranded DNA + H2O = a 5'-end dephospho-2'-deoxyribonucleoside in single-stranded DNA + a 2'-deoxyribonucleoside 3'-phosphate + H(+). The enzyme catalyses a 5'-end 5'-phospho-2'-deoxyribonucleotide in single-stranded DNA + H2O = a 5'-end 5'-dephospho-2'-deoxyribonucleotide in single-stranded DNA + phosphate. It catalyses the reaction a 3-lyso-sn-glycero-1-phospho-(3'-acyl-1'-sn-glycerol) + a 1-acyl-sn-glycerol = a 3-acyl-sn-glycero-1-phospho-(3'-acyl-1'-sn-glycerol) + glycerol. It carries out the reaction 3-lyso-sn-glycero-1-phospho-(3'-(9Z-octadecenoyl)-1'-sn-glycerol) + 1-(9Z-octadecenoyl)-sn-glycerol = 3-(9Z-octadecenoyl)-sn-glycero-1-phospho-(3'-(9Z-octadecenoyl)-1'-sn-glycerol) + glycerol. 5'-&gt;3' exonuclease that hydrolyzes the phosphodiester bond of single-stranded DNA (ssDNA) and RNA molecules to form nucleoside 3'-monophosphates and 5'-end 5'-hydroxy deoxyribonucleotide/ribonucleotide fragments. Partially redundant with PLD4, can cleave all four nucleotides displaying higher efficiency for ssDNA and RNA fragments initiated with uridine and guanosine residues and lower efficiency for cytidine-initiated substrates. As a result, it does not always degrade polynucleotides to the single nucleotide level, it can stall at specific sites sparing certain fragments from exonucleolytic degradation. Processes self and pathogenic ssDNA and RNA molecules that reach the endolysosomal compartment via phagocytosis or autophagy and may serve as 'danger' signals for recognition by innate immune receptors such as toll-like receptors (TLRs). Degrades mitochondrial CpG-rich ssDNA fragments to prevent TLR9 activation and autoinflammatory response, but it can cleave viral RNA to generate ligands for TLR7 activation and initiate antiviral immune responses. In plasmacytoid dendritic cells, it cooperates with endonuclease RNASET2 to release 2',3'-cyclic guanosine monophosphate (2',3'-cGMP), a potent stimulatory ligand for TLR7. Produces 2',3'-cGMPs and cytidine-rich RNA fragments that occupy TLR7 ligand-binding pockets and trigger a signaling-competent state. Can exert polynucleotide phosphatase activity toward 5'-phosphorylated ssDNA substrates although at a slow rate. Transphosphatidylase that catalyzes the exchange with R to S stereo-inversion of the glycerol moiety between (S,R)-lysophosphatidylglycerol (LPG) and monoacylglycerol (MAG) substrates to yield (S,S)-bis(monoacylglycero)phosphate (BMP). Can synthesize a variety of (S,S)-BMPs representing the main phospholipid constituent of lysosomal intralumenal vesicle (ILV) membranes that bind acid hydrolases for lipid degradation. Regulates the homeostasis and interorganellar communication of the endolysosomal system with an overall impact on cellular removal of dysfunctional organelles via autophagy as well as proper protein and lipid turnover. May play a role in myotube formation in response to ER stress. The protein is 5'-3' exonuclease PLD3 (PLD3) of Bos taurus (Bovine).